We begin with the raw amino-acid sequence, 333 residues long: Threonine-phosphate decarboxylase (333 aa).

Lys199 is modified (N6-(pyridoxal phosphate)lysine).

The protein belongs to the class-I pyridoxal-phosphate-dependent aminotransferase family. In terms of assembly, homodimer. Pyridoxal 5'-phosphate is required as a cofactor.

The protein localises to the cytoplasm. The enzyme catalyses O-phospho-L-threonine + H(+) = (R)-1-aminopropan-2-yl phosphate + CO2. Its pathway is cofactor biosynthesis; adenosylcobalamin biosynthesis. Decarboxylates L-threonine-O-3-phosphate to yield (R)-1-amino-2-propanol O-2-phosphate, the precursor for the linkage between the nucleotide loop and the corrin ring in cobalamin. This is Threonine-phosphate decarboxylase (cobC) from Sinorhizobium sp.